The sequence spans 747 residues: Superkiller protein 7 (747 aa).

Positions 14-51 are disordered; that stretch reads KSKGLLSADQSHSTSKSASLLERLHKNRETKDNNAETK. Residues 21-31 show a composition bias toward polar residues; sequence ADQSHSTSKSA. The span at 35-51 shows a compositional bias: basic and acidic residues; it reads ERLHKNRETKDNNAETK. Residues serine 88 and serine 90 each carry the phosphoserine modification. The interval 89–117 is disordered; that stretch reads NSDLEKQGKSVTLDSKENELPTKRKSPDD. The tr-type G domain maps to 265–503; it reads PLNLTCLFLG…YVPEWYEGPT (239 aa). Residues 274-281 form a G1 region; it reads GDTNAGKS. 274 to 281 contributes to the GTP binding site; it reads GDTNAGKS. Residues 331-335 form a G2 region; sequence GFSMF. Positions 356-359 are G3; sequence DTPG. Residues 356 to 360 and 427 to 430 each bind GTP; these read DTPGS and NKAD. The tract at residues 427 to 430 is G4; that stretch reads NKAD. The segment at 467–469 is G5; the sequence is SGL.

The protein belongs to the TRAFAC class translation factor GTPase superfamily. Classic translation factor GTPase family. In terms of assembly, interacts with the exosome and with the SKI complex composed of at least SKI2, SKI3 and SKI8. Interacts directly with SKI3 and SKI8.

The protein resides in the cytoplasm. Its function is as follows. Represses the expression of non-poly(A) mRNAs like L-A or M viruses and is therefore involved in antiviral system. Mediates interactions via its N-terminus between the exosome and the SKI complex which operate in the 3'-to-5' mRNA-decay pathway. By interacting with NAM7, is also required for nonsense-mediated 3'-to-5' mRNA-decay (NMD). May recognize a stalled 80S ribosome at the 3'-end of a nonstop mRNA which leads to the recruitment of the exosome and SKI complexes to the mRNAs to be degraded. The sequence is that of Superkiller protein 7 (SKI7) from Saccharomyces cerevisiae (strain ATCC 204508 / S288c) (Baker's yeast).